The primary structure comprises 245 residues: Dof zinc finger protein DOF3.2 (245 aa).

A compositionally biased stretch (polar residues) spans 15–26 (SCSTQDYQNQKK). Positions 15–41 (SCSTQDYQNQKKPLSATRPAPPEQSLR) are disordered. Residues 40–94 (LRCPRCDSTNTKFCYYNNYSLSQPRYFCKSCRRYWTKGGILRNIPIGGAYRKHKR) form a Dof-type zinc finger. Residues Cys42, Cys45, Cys67, and Cys70 each coordinate Zn(2+). A disordered region spans residues 91–118 (KHKRSSSATKSLRTTPEPTMTHDGKSFP). The segment covering 96–108 (SSATKSLRTTPEP) has biased composition (polar residues).

As to quaternary structure, interacts with TCP14. In terms of tissue distribution, the PEAR proteins (e.g. DOF2.4, DOF5.1, DOF3.2, DOF1.1, DOF5.6 and DOF5.3) form a short-range concentration gradient that peaks at protophloem sieve elements (PSE).

Its subcellular location is the nucleus. Its function is as follows. Transcription factor that negatively affects seed germination and opposes TCP14 function in the regulation of a specific set of abscisic acid-related genes. The PEAR proteins (e.g. DOF2.4, DOF5.1, DOF3.2, DOF1.1, DOF5.6 and DOF5.3) activate gene expression that promotes radial growth of protophloem sieve elements. The protein is Dof zinc finger protein DOF3.2 of Arabidopsis thaliana (Mouse-ear cress).